The primary structure comprises 353 residues: UDP-N-acetylglucosamine--N-acetylmuramyl-(pentapeptide) pyrophosphoryl-undecaprenol N-acetylglucosamine transferase (353 aa).

Residues 11–13 (SAG), Arg164, Ser194, and Gln289 each bind UDP-N-acetyl-alpha-D-glucosamine.

The protein belongs to the glycosyltransferase 28 family. MurG subfamily.

Its subcellular location is the cell membrane. The catalysed reaction is di-trans,octa-cis-undecaprenyl diphospho-N-acetyl-alpha-D-muramoyl-L-alanyl-D-glutamyl-meso-2,6-diaminopimeloyl-D-alanyl-D-alanine + UDP-N-acetyl-alpha-D-glucosamine = di-trans,octa-cis-undecaprenyl diphospho-[N-acetyl-alpha-D-glucosaminyl-(1-&gt;4)]-N-acetyl-alpha-D-muramoyl-L-alanyl-D-glutamyl-meso-2,6-diaminopimeloyl-D-alanyl-D-alanine + UDP + H(+). The protein operates within cell wall biogenesis; peptidoglycan biosynthesis. In terms of biological role, cell wall formation. Catalyzes the transfer of a GlcNAc subunit on undecaprenyl-pyrophosphoryl-MurNAc-pentapeptide (lipid intermediate I) to form undecaprenyl-pyrophosphoryl-MurNAc-(pentapeptide)GlcNAc (lipid intermediate II). The polypeptide is UDP-N-acetylglucosamine--N-acetylmuramyl-(pentapeptide) pyrophosphoryl-undecaprenol N-acetylglucosamine transferase (Clostridium kluyveri (strain ATCC 8527 / DSM 555 / NBRC 12016 / NCIMB 10680 / K1)).